A 336-amino-acid chain; its full sequence is DNA-directed RNA polymerase subunit alpha (336 aa).

The tract at residues 1 to 235 (MIEFVIPKKL…HFKIVTEGLP (235 aa)) is alpha N-terminal domain (alpha-NTD). The alpha C-terminal domain (alpha-CTD) stretch occupies residues 264 to 336 (RENSDVYNRK…KFGLELRKGE (73 aa)).

It belongs to the RNA polymerase alpha chain family. As to quaternary structure, homodimer. The RNAP catalytic core consists of 2 alpha, 1 beta, 1 beta' and 1 omega subunit. When a sigma factor is associated with the core the holoenzyme is formed, which can initiate transcription.

The enzyme catalyses RNA(n) + a ribonucleoside 5'-triphosphate = RNA(n+1) + diphosphate. Functionally, DNA-dependent RNA polymerase catalyzes the transcription of DNA into RNA using the four ribonucleoside triphosphates as substrates. The polypeptide is DNA-directed RNA polymerase subunit alpha (Thermotoga maritima (strain ATCC 43589 / DSM 3109 / JCM 10099 / NBRC 100826 / MSB8)).